The primary structure comprises 320 residues: o-succinylbenzoate synthase (320 aa).

Catalysis depends on K133, which acts as the Proton donor. Positions 161, 190, and 213 each coordinate Mg(2+). K235 acts as the Proton acceptor in catalysis.

This sequence belongs to the mandelate racemase/muconate lactonizing enzyme family. MenC type 1 subfamily. A divalent metal cation is required as a cofactor.

The catalysed reaction is (1R,6R)-6-hydroxy-2-succinyl-cyclohexa-2,4-diene-1-carboxylate = 2-succinylbenzoate + H2O. The protein operates within quinol/quinone metabolism; 1,4-dihydroxy-2-naphthoate biosynthesis; 1,4-dihydroxy-2-naphthoate from chorismate: step 4/7. Its pathway is quinol/quinone metabolism; menaquinone biosynthesis. Its function is as follows. Converts 2-succinyl-6-hydroxy-2,4-cyclohexadiene-1-carboxylate (SHCHC) to 2-succinylbenzoate (OSB). The sequence is that of o-succinylbenzoate synthase from Escherichia coli O45:K1 (strain S88 / ExPEC).